We begin with the raw amino-acid sequence, 487 residues long: Siroheme synthase (487 aa).

The interval 1 to 203 is precorrin-2 dehydrogenase /sirohydrochlorin ferrochelatase; it reads MNTFPLFFKL…GRSVEAEQAL (203 aa). Residues 22 to 23 and 43 to 44 each bind NAD(+); these read EV and PQ. Serine 128 is subject to Phosphoserine. The tract at residues 229–487 is uroporphyrinogen-III C-methyltransferase; it reads GEVYIVGAGP…DQQAHALNML (259 aa). An S-adenosyl-L-methionine-binding site is contributed by proline 238. Aspartate 261 (proton acceptor) is an active-site residue. The active-site Proton donor is lysine 283. S-adenosyl-L-methionine contacts are provided by residues 314–316, valine 319, 344–345, methionine 396, and alanine 425; these read GGD and TA.

This sequence in the N-terminal section; belongs to the precorrin-2 dehydrogenase / sirohydrochlorin ferrochelatase family. The protein in the C-terminal section; belongs to the precorrin methyltransferase family.

The catalysed reaction is uroporphyrinogen III + 2 S-adenosyl-L-methionine = precorrin-2 + 2 S-adenosyl-L-homocysteine + H(+). It carries out the reaction precorrin-2 + NAD(+) = sirohydrochlorin + NADH + 2 H(+). The enzyme catalyses siroheme + 2 H(+) = sirohydrochlorin + Fe(2+). The protein operates within cofactor biosynthesis; adenosylcobalamin biosynthesis; precorrin-2 from uroporphyrinogen III: step 1/1. It functions in the pathway cofactor biosynthesis; adenosylcobalamin biosynthesis; sirohydrochlorin from precorrin-2: step 1/1. It participates in porphyrin-containing compound metabolism; siroheme biosynthesis; precorrin-2 from uroporphyrinogen III: step 1/1. Its pathway is porphyrin-containing compound metabolism; siroheme biosynthesis; siroheme from sirohydrochlorin: step 1/1. The protein operates within porphyrin-containing compound metabolism; siroheme biosynthesis; sirohydrochlorin from precorrin-2: step 1/1. Multifunctional enzyme that catalyzes the SAM-dependent methylations of uroporphyrinogen III at position C-2 and C-7 to form precorrin-2 via precorrin-1. Then it catalyzes the NAD-dependent ring dehydrogenation of precorrin-2 to yield sirohydrochlorin. Finally, it catalyzes the ferrochelation of sirohydrochlorin to yield siroheme. In Psychrobacter sp. (strain PRwf-1), this protein is Siroheme synthase.